The chain runs to 203 residues: Ribosome maturation factor RimP (203 aa).

A compositionally biased stretch (polar residues) spans 1–21; that stretch reads MSDSEATTSTDRSESNSTATI. Positions 1–23 are disordered; that stretch reads MSDSEATTSTDRSESNSTATIHN.

It belongs to the RimP family.

The protein localises to the cytoplasm. Required for maturation of 30S ribosomal subunits. This chain is Ribosome maturation factor RimP, found in Paenarthrobacter aurescens (strain TC1).